The sequence spans 79 residues: D-alanyl carrier protein (79 aa).

The Carrier domain maps to 1 to 77 (MDTKQGVLDI…KIVAKVESLE (77 aa)). Residue Ser35 is modified to O-(pantetheine 4'-phosphoryl)serine.

This sequence belongs to the DltC family. 4'-phosphopantetheine is transferred from CoA to a specific serine of apo-DCP.

It localises to the cytoplasm. The protein operates within cell wall biogenesis; lipoteichoic acid biosynthesis. In terms of biological role, carrier protein involved in the D-alanylation of lipoteichoic acid (LTA). The loading of thioester-linked D-alanine onto DltC is catalyzed by D-alanine--D-alanyl carrier protein ligase DltA. The DltC-carried D-alanyl group is further transferred to cell membrane phosphatidylglycerol (PG) by forming an ester bond, probably catalyzed by DltD. D-alanylation of LTA plays an important role in modulating the properties of the cell wall in Gram-positive bacteria, influencing the net charge of the cell wall. The sequence is that of D-alanyl carrier protein from Lactobacillus acidophilus (strain ATCC 700396 / NCK56 / N2 / NCFM).